We begin with the raw amino-acid sequence, 749 residues long: RNA-binding protein 5-B (749 aa).

The tract at residues methionine 1–histidine 88 is disordered. The 81-residue stretch at lysine 102–proline 182 folds into the RRM 1 domain. The RanBP2-type zinc finger occupies lysine 185–glutamate 214. Residues serine 241–serine 325 form the RRM 2 domain. 4 disordered regions span residues glutamine 425–aspartate 471, proline 520–isoleucine 558, asparagine 570–alanine 595, and threonine 626–isoleucine 680. Residues glutamine 429 to alanine 460 show a composition bias toward low complexity. Basic and acidic residues-rich tracts occupy residues serine 585 to alanine 594 and glutamate 627 to glycine 648. Positions asparagine 677–serine 723 constitute a G-patch domain.

This sequence belongs to the RBM5/RBM10 family. In terms of assembly, component of the spliceosome A complex (also known as the prespliceosome). Appears to dissociate from the spliceosome upon formation of the spliceosome B complex (also known as the precatalytic spliceosome), in which the heterotrimeric U4/U6.U5 snRNPs are bound.

Its subcellular location is the nucleus. Its function is as follows. Component of the spliceosome A complex. Regulates alternative splicing of a number of mRNAs. May modulate splice site pairing after recruitment of the U1 and U2 snRNPs to the 5' and 3' splice sites of the intron. This chain is RNA-binding protein 5-B (rbm5-b), found in Xenopus laevis (African clawed frog).